The chain runs to 152 residues: Large ribosomal subunit protein eL14 (152 aa).

This sequence belongs to the eukaryotic ribosomal protein eL14 family.

The chain is Large ribosomal subunit protein eL14 (RPL14) from Lumbricus rubellus (Humus earthworm).